A 430-amino-acid polypeptide reads, in one-letter code: Serine--tRNA ligase (430 aa).

237-239 (TAE) provides a ligand contact to L-serine. Position 268–270 (268–270 (RSE)) interacts with ATP. Glu-291 is an L-serine binding site. 355 to 358 (EISS) serves as a coordination point for ATP. Ser-391 provides a ligand contact to L-serine.

Belongs to the class-II aminoacyl-tRNA synthetase family. Type-1 seryl-tRNA synthetase subfamily. Homodimer. The tRNA molecule binds across the dimer.

Its subcellular location is the cytoplasm. It catalyses the reaction tRNA(Ser) + L-serine + ATP = L-seryl-tRNA(Ser) + AMP + diphosphate + H(+). The catalysed reaction is tRNA(Sec) + L-serine + ATP = L-seryl-tRNA(Sec) + AMP + diphosphate + H(+). Its pathway is aminoacyl-tRNA biosynthesis; selenocysteinyl-tRNA(Sec) biosynthesis; L-seryl-tRNA(Sec) from L-serine and tRNA(Sec): step 1/1. In terms of biological role, catalyzes the attachment of serine to tRNA(Ser). Is also able to aminoacylate tRNA(Sec) with serine, to form the misacylated tRNA L-seryl-tRNA(Sec), which will be further converted into selenocysteinyl-tRNA(Sec). The polypeptide is Serine--tRNA ligase (Salmonella enteritidis PT4 (strain P125109)).